The following is a 468-amino-acid chain: Dimethylamine methyltransferase MtbB2 (468 aa).

Residue pyrrolysine 356 is a non-standard amino acid, pyrrolysine.

Belongs to the dimethylamine methyltransferase family.

It carries out the reaction Co(I)-[dimethylamine-specific corrinoid protein] + dimethylamine + H(+) = methyl-Co(III)-[dimethylamine-specific corrinoid protein] + methylamine. Its pathway is one-carbon metabolism; methanogenesis from dimethylamine. Its function is as follows. Catalyzes the transfer of a methyl group from dimethylamine to the corrinoid cofactor of MtbC. The polypeptide is Dimethylamine methyltransferase MtbB2 (mtbB2) (Methanosarcina acetivorans (strain ATCC 35395 / DSM 2834 / JCM 12185 / C2A)).